Here is a 305-residue protein sequence, read N- to C-terminus: Glutaminase (305 aa).

Serine 61, asparagine 113, glutamate 158, asparagine 165, tyrosine 189, tyrosine 241, and valine 259 together coordinate substrate.

Belongs to the glutaminase family. Homotetramer.

The enzyme catalyses L-glutamine + H2O = L-glutamate + NH4(+). This is Glutaminase from Clostridium botulinum (strain 657 / Type Ba4).